The chain runs to 153 residues: UPF0756 membrane protein BA_4840/GBAA_4840/BAS4489 (153 aa).

4 helical membrane-spanning segments follow: residues 8-28 (FLFI…TVAI), 54-74 (LGVT…EIGF), 87-107 (WIAL…VQLL), and 117-137 (LVFG…GPLI).

This sequence belongs to the UPF0756 family.

Its subcellular location is the cell membrane. The chain is UPF0756 membrane protein BA_4840/GBAA_4840/BAS4489 from Bacillus anthracis.